A 256-amino-acid polypeptide reads, in one-letter code: Ribonuclease HII (256 aa).

Residues 72 to 256 (ALICGIDEVG…TFEPIKSLVN (185 aa)) enclose the RNase H type-2 domain. Residues aspartate 78, glutamate 79, and aspartate 170 each coordinate a divalent metal cation.

It belongs to the RNase HII family. Mn(2+) is required as a cofactor. Requires Mg(2+) as cofactor.

It localises to the cytoplasm. It carries out the reaction Endonucleolytic cleavage to 5'-phosphomonoester.. In terms of biological role, endonuclease that specifically degrades the RNA of RNA-DNA hybrids. This chain is Ribonuclease HII, found in Staphylococcus saprophyticus subsp. saprophyticus (strain ATCC 15305 / DSM 20229 / NCIMB 8711 / NCTC 7292 / S-41).